We begin with the raw amino-acid sequence, 304 residues long: Calmodulin-lysine N-methyltransferase (304 aa).

The protein belongs to the class I-like SAM-binding methyltransferase superfamily. CLNMT methyltransferase family. In terms of assembly, monomer. As to expression, expressed in discreet spatial and tissue-specific patterns including root tips, leaves-tips, floral buds, stamens, hydathodes, stigma, anther, siliques, apical meristems and germinating seeds. Also observed at high levels in the root stele region.

The protein localises to the cytoplasm. It localises to the nucleus. It carries out the reaction [calmodulin]-L-lysine + S-adenosyl-L-methionine = [calmodulin]-N(6)-methyl-L-lysine + S-adenosyl-L-homocysteine + H(+). In terms of biological role, catalyzes the trimethylation of calmodulin. Regulates roots development probably by modulating auxin signaling responses. May be involved in gravitropism. Involved in abscisic acid (ABA)-mediated and abiotic stress responses, including salt (NaCl), cold, drought and heat stresses. This is Calmodulin-lysine N-methyltransferase from Arabidopsis thaliana (Mouse-ear cress).